The primary structure comprises 292 residues: Pyridoxal 5'-phosphate synthase subunit PdxS (292 aa).

Residue Asp-22 participates in D-ribose 5-phosphate binding. The Schiff-base intermediate with D-ribose 5-phosphate role is filled by Lys-79. Gly-151 contributes to the D-ribose 5-phosphate binding site. Arg-163 is a binding site for D-glyceraldehyde 3-phosphate. Residues Gly-212 and 233–234 (GS) contribute to the D-ribose 5-phosphate site.

It belongs to the PdxS/SNZ family. In terms of assembly, in the presence of PdxT, forms a dodecamer of heterodimers.

It carries out the reaction aldehydo-D-ribose 5-phosphate + D-glyceraldehyde 3-phosphate + L-glutamine = pyridoxal 5'-phosphate + L-glutamate + phosphate + 3 H2O + H(+). The protein operates within cofactor biosynthesis; pyridoxal 5'-phosphate biosynthesis. In terms of biological role, catalyzes the formation of pyridoxal 5'-phosphate from ribose 5-phosphate (RBP), glyceraldehyde 3-phosphate (G3P) and ammonia. The ammonia is provided by the PdxT subunit. Can also use ribulose 5-phosphate and dihydroxyacetone phosphate as substrates, resulting from enzyme-catalyzed isomerization of RBP and G3P, respectively. This Caldanaerobacter subterraneus subsp. tengcongensis (strain DSM 15242 / JCM 11007 / NBRC 100824 / MB4) (Thermoanaerobacter tengcongensis) protein is Pyridoxal 5'-phosphate synthase subunit PdxS.